The primary structure comprises 103 residues: Integration host factor subunit beta (103 aa).

The segment at 62–81 is disordered; sequence RNPKTGESVALPGKHVPHFK.

It belongs to the bacterial histone-like protein family. In terms of assembly, heterodimer of an alpha and a beta chain.

Functionally, this protein is one of the two subunits of integration host factor, a specific DNA-binding protein that functions in genetic recombination as well as in transcriptional and translational control. This Xanthomonas campestris pv. campestris (strain B100) protein is Integration host factor subunit beta.